Consider the following 192-residue polypeptide: NADH-ubiquinone oxidoreductase subunit 9 (192 aa).

It belongs to the complex I 30 kDa subunit family. In terms of assembly, complex I is composed of about 30 different subunits.

Its subcellular location is the mitochondrion inner membrane. The enzyme catalyses a ubiquinone + NADH + 5 H(+)(in) = a ubiquinol + NAD(+) + 4 H(+)(out). In terms of biological role, core subunit of the mitochondrial membrane respiratory chain NADH dehydrogenase (Complex I) that is believed to belong to the minimal assembly required for catalysis. Complex I functions in the transfer of electrons from NADH to the respiratory chain. The immediate electron acceptor for the enzyme is believed to be ubiquinone. The chain is NADH-ubiquinone oxidoreductase subunit 9 (NAD9) from Prototheca wickerhamii.